The primary structure comprises 640 residues: Calpain-5 (640 aa).

One can recognise a Calpain catalytic domain in the interval 26–343 (LFEDPHFPAS…FTDIIKCRLI (318 aa)). Residues Cys-81, His-252, and Asn-284 contribute to the active site. Residues 344 to 496 (NTSYLSIHKT…VFTDVPSNCR (153 aa)) are domain III. Residues 499-617 (RLDEPPRTCW…HSLHLQDRSG (119 aa)) enclose the C2 domain.

Belongs to the peptidase C2 family.

Calcium-regulated non-lysosomal thiol-protease. This chain is Calpain-5 (Capn5), found in Rattus norvegicus (Rat).